A 172-amino-acid polypeptide reads, in one-letter code: Ribosome maturation factor RimM (172 aa).

The region spanning 96–168 is the PRC barrel domain; it reads EGEFYYHQII…RVDVELMEGL (73 aa).

Belongs to the RimM family. In terms of assembly, binds ribosomal protein uS19.

The protein localises to the cytoplasm. An accessory protein needed during the final step in the assembly of 30S ribosomal subunit, possibly for assembly of the head region. Essential for efficient processing of 16S rRNA. May be needed both before and after RbfA during the maturation of 16S rRNA. It has affinity for free ribosomal 30S subunits but not for 70S ribosomes. This is Ribosome maturation factor RimM from Streptococcus pyogenes serotype M18 (strain MGAS8232).